A 265-amino-acid polypeptide reads, in one-letter code: 4-hydroxy-tetrahydrodipicolinate reductase (265 aa).

Residues 7–12 (GASGRM) and aspartate 33 contribute to the NAD(+) site. Residue arginine 34 coordinates NADP(+). Residues 96 to 98 (GTT) and 120 to 123 (AANM) contribute to the NAD(+) site. The active-site Proton donor/acceptor is histidine 153. Histidine 154 is a (S)-2,3,4,5-tetrahydrodipicolinate binding site. The active-site Proton donor is the lysine 157. 163–164 (GT) provides a ligand contact to (S)-2,3,4,5-tetrahydrodipicolinate.

This sequence belongs to the DapB family.

It localises to the cytoplasm. The enzyme catalyses (S)-2,3,4,5-tetrahydrodipicolinate + NAD(+) + H2O = (2S,4S)-4-hydroxy-2,3,4,5-tetrahydrodipicolinate + NADH + H(+). It catalyses the reaction (S)-2,3,4,5-tetrahydrodipicolinate + NADP(+) + H2O = (2S,4S)-4-hydroxy-2,3,4,5-tetrahydrodipicolinate + NADPH + H(+). Its pathway is amino-acid biosynthesis; L-lysine biosynthesis via DAP pathway; (S)-tetrahydrodipicolinate from L-aspartate: step 4/4. Catalyzes the conversion of 4-hydroxy-tetrahydrodipicolinate (HTPA) to tetrahydrodipicolinate. The chain is 4-hydroxy-tetrahydrodipicolinate reductase from Burkholderia lata (strain ATCC 17760 / DSM 23089 / LMG 22485 / NCIMB 9086 / R18194 / 383).